A 499-amino-acid chain; its full sequence is Probable cytosol aminopeptidase (499 aa).

Residues K262 and D267 each contribute to the Mn(2+) site. K274 is a catalytic residue. Positions 285, 344, and 346 each coordinate Mn(2+). R348 is a catalytic residue.

Belongs to the peptidase M17 family. Mn(2+) is required as a cofactor.

The protein resides in the cytoplasm. It catalyses the reaction Release of an N-terminal amino acid, Xaa-|-Yaa-, in which Xaa is preferably Leu, but may be other amino acids including Pro although not Arg or Lys, and Yaa may be Pro. Amino acid amides and methyl esters are also readily hydrolyzed, but rates on arylamides are exceedingly low.. It carries out the reaction Release of an N-terminal amino acid, preferentially leucine, but not glutamic or aspartic acids.. Presumably involved in the processing and regular turnover of intracellular proteins. Catalyzes the removal of unsubstituted N-terminal amino acids from various peptides. The protein is Probable cytosol aminopeptidase of Protochlamydia amoebophila (strain UWE25).